Consider the following 77-residue polypeptide: Acyl carrier protein (77 aa).

One can recognise a Carrier domain in the interval 1–76 (MSLEDDVKAI…DVIKYIQEHQ (76 aa)). O-(pantetheine 4'-phosphoryl)serine is present on S36.

This sequence belongs to the acyl carrier protein (ACP) family. Post-translationally, 4'-phosphopantetheine is transferred from CoA to a specific serine of apo-ACP by AcpS. This modification is essential for activity because fatty acids are bound in thioester linkage to the sulfhydryl of the prosthetic group.

It is found in the cytoplasm. It participates in lipid metabolism; fatty acid biosynthesis. In terms of biological role, carrier of the growing fatty acid chain in fatty acid biosynthesis. In Chlamydia trachomatis serovar L2 (strain ATCC VR-902B / DSM 19102 / 434/Bu), this protein is Acyl carrier protein.